A 202-amino-acid chain; its full sequence is Osteoclast-stimulating factor 1 (202 aa).

In terms of domain architecture, SH3 spans 12 to 71; sequence GQVKVFRALYTFEPRTPDELYFEEGDIIYISDMSDTNWWKGTCKGRTGLIPSNYVAEQAE. ANK repeat units follow at residues 72–101, 105–135, and 139–168; these read SIDN…GVNG, AGNT…ELNQ, and LGDT…RTDL.

It localises to the cytoplasm. Induces bone resorption, acting probably through a signaling cascade which results in the secretion of factor(s) enhancing osteoclast formation and activity. This is Osteoclast-stimulating factor 1 (OSTF1) from Gallus gallus (Chicken).